A 395-amino-acid polypeptide reads, in one-letter code: Tryptophan--tRNA ligase (395 aa).

Residues 8–10 (RPT) and 16–17 (GH) contribute to the ATP site. The 'HIGH' region motif lies at 9 to 17 (PTGKLHLGH). The interval 117-179 (RLTDLEKEFK…EIEPEILKRL (63 aa)) is insert. Residue aspartate 204 participates in L-tryptophan binding. Residues 216 to 218 (GED), isoleucine 254, and 261 to 265 (KMSKS) each bind ATP. Residues 261–265 (KMSKS) carry the 'KMSKS' region motif.

The protein belongs to the class-I aminoacyl-tRNA synthetase family. Homodimer.

It localises to the cytoplasm. It carries out the reaction tRNA(Trp) + L-tryptophan + ATP = L-tryptophyl-tRNA(Trp) + AMP + diphosphate + H(+). Functionally, catalyzes the attachment of tryptophan to tRNA(Trp). This Aquifex aeolicus (strain VF5) protein is Tryptophan--tRNA ligase.